A 686-amino-acid polypeptide reads, in one-letter code: Chondroitin synthase (686 aa).

The interval 130-417 (YVWAGKRKEL…LLQQKVPYFY (288 aa)) is galactosaminyltransferase; A1 domain. UDP-N-acetyl-alpha-D-galactosamine contacts are provided by residues Pro-157, Arg-161, Asp-188, Tyr-217, Arg-223, and 239–240 (DC). Asp-241 is a binding site for Mn(2+). UDP-N-acetyl-alpha-D-galactosamine is bound at residue 361 to 362 (ED). His-386 is a binding site for Mn(2+). Residues 418-682 (RKKEKIESAT…ECRKYTWEKI (265 aa)) form a glucuronosyltransferase; A2 domain region. Residues Tyr-441, Asp-469, and 517 to 520 (QLDS) contribute to the UDP-alpha-D-glucuronate site. Asp-521 provides a ligand contact to Mn(2+). Residues His-581 and 603 to 604 (AV) contribute to the UDP-alpha-D-glucuronate site. A Mn(2+)-binding site is contributed by His-631.

Belongs to the glycosyltransferase 2 family. CS/HAS subfamily. It depends on Mn(2+) as a cofactor.

It carries out the reaction 3-O-(beta-D-GlcA-(1-&gt;3)-beta-D-GalNAc-(1-&gt;4)-beta-D-GlcA-(1-&gt;3)-beta-D-Gal-(1-&gt;3)-beta-D-Gal-(1-&gt;4)-beta-D-Xyl)-L-seryl-[protein] + UDP-N-acetyl-alpha-D-galactosamine = 3-O-(beta-D-GalNAc-(1-&gt;4)-beta-D-GlcA-(1-&gt;3)-beta-D-GalNAc-(1-&gt;4)-beta-D-GlcA-(1-&gt;3)-beta-D-Gal-(1-&gt;3)-beta-D-Gal-(1-&gt;4)-beta-D-Xyl)-L-seryl-[protein] + UDP + H(+). The catalysed reaction is 3-O-{beta-D-GlcA-(1-&gt;3)-[beta-D-GalNAc-(1-&gt;4)-beta-D-GlcA-(1-&gt;3)](n)-beta-D-GalNAc-(1-&gt;4)-beta-D-GlcA-(1-&gt;3)-beta-D-Gal-(1-&gt;3)-beta-D-Gal-(1-&gt;4)-beta-D-Xyl}-L-seryl-[protein] + UDP-N-acetyl-alpha-D-galactosamine = 3-O-{[beta-D-GalNAc-(1-&gt;4)-beta-D-GlcA-(1-&gt;3)](n+1)-beta-D-GalNAc-(1-&gt;4)-beta-D-GlcA-(1-&gt;3)-beta-D-Gal-(1-&gt;3)-beta-D-Gal-(1-&gt;4)-beta-D-Xyl}-L-seryl-[protein] + UDP + H(+). It catalyses the reaction 3-O-(beta-D-GalNAc-(1-&gt;4)-beta-D-GlcA-(1-&gt;3)-beta-D-Gal-(1-&gt;3)-beta-D-Gal-(1-&gt;4)-beta-D-Xyl)-L-seryl-[protein] + UDP-alpha-D-glucuronate = 3-O-(beta-D-GlcA-(1-&gt;3)-beta-D-GalNAc-(1-&gt;4)-beta-D-GlcA-(1-&gt;3)-beta-D-Gal-(1-&gt;3)-beta-D-Gal-(1-&gt;4)-beta-D-Xyl)-L-seryl-[protein] + UDP + H(+). The enzyme catalyses 3-O-{[beta-D-GalNAc-(1-&gt;4)-beta-D-GlcA-(1-&gt;3)](n)-beta-D-GalNAc-(1-&gt;4)-beta-D-GlcA-(1-&gt;3)-beta-D-Gal-(1-&gt;3)-beta-D-Gal-(1-&gt;4)-beta-D-Xyl}-L-seryl-[protein] + UDP-alpha-D-glucuronate = 3-O-{beta-D-GlcA-(1-&gt;3)-[beta-D-GalNAc-(1-&gt;4)-beta-D-GlcA-(1-&gt;3)](n)-beta-D-GalNAc-(1-&gt;4)-beta-D-GlcA-(1-&gt;3)-beta-D-Gal-(1-&gt;3)-beta-D-Gal-(1-&gt;4)-beta-D-Xyl}-L-seryl-[protein] + UDP + H(+). Its function is as follows. Glycosyltransferase that catalyzes elongation of chondroitin, a polysaccharide composed of a repeating disaccharide of N-acetylgalactosamine (GalNAc) and glucuronic acid (GlcUA) units, by alternatively transferring the GlcUA and GalNAc moiety from UDP-GlcUA and UDP-GalNAc to the non-reducing ends of the chondroitin chain. Each chondroitin unit has the composition beta-(1-&gt;4)-GlcUA-beta-(1-&gt;3)-GalNAc. The protein is Chondroitin synthase (kfoC) of Escherichia coli.